Reading from the N-terminus, the 318-residue chain is Forkhead box protein I2 (318 aa).

Residues Met-1–Gly-30 are disordered. Positions Arg-102 to Lys-196 form a DNA-binding region, fork-head.

It is found in the nucleus. Functionally, possible transcriptional activator. This Homo sapiens (Human) protein is Forkhead box protein I2 (FOXI2).